Consider the following 433-residue polypeptide: 23S rRNA (uracil(1939)-C(5))-methyltransferase RlmD (433 aa).

The region spanning 1-53 (MPVAVIESLDHEGRGVAHVDGKVVFVEGALAGEQVEYTVYRQRPSYDLAEATR) is the TRAM domain. Positions 66, 72, 75, and 154 each coordinate [4Fe-4S] cluster. Q263, F292, N297, E313, N341, and D362 together coordinate S-adenosyl-L-methionine. The active-site Nucleophile is C389.

The protein belongs to the class I-like SAM-binding methyltransferase superfamily. RNA M5U methyltransferase family. RlmD subfamily.

The catalysed reaction is uridine(1939) in 23S rRNA + S-adenosyl-L-methionine = 5-methyluridine(1939) in 23S rRNA + S-adenosyl-L-homocysteine + H(+). In terms of biological role, catalyzes the formation of 5-methyl-uridine at position 1939 (m5U1939) in 23S rRNA. The polypeptide is 23S rRNA (uracil(1939)-C(5))-methyltransferase RlmD (Aromatoleum aromaticum (strain DSM 19018 / LMG 30748 / EbN1) (Azoarcus sp. (strain EbN1))).